Consider the following 429-residue polypeptide: Glutamate-1-semialdehyde 2,1-aminomutase 2 (429 aa).

N6-(pyridoxal phosphate)lysine is present on Lys-268.

This sequence belongs to the class-III pyridoxal-phosphate-dependent aminotransferase family. HemL subfamily. As to quaternary structure, homodimer. Pyridoxal 5'-phosphate serves as cofactor.

It localises to the cytoplasm. The catalysed reaction is (S)-4-amino-5-oxopentanoate = 5-aminolevulinate. Its pathway is porphyrin-containing compound metabolism; protoporphyrin-IX biosynthesis; 5-aminolevulinate from L-glutamyl-tRNA(Glu): step 2/2. The chain is Glutamate-1-semialdehyde 2,1-aminomutase 2 from Geobacillus kaustophilus (strain HTA426).